A 128-amino-acid polypeptide reads, in one-letter code: Disintegrin lebein-2-alpha (128 aa).

A signal peptide spans 1–20; sequence MIQVLLVTICLAVFPFHGSS. Residues 21 to 46 constitute a propeptide that is removed on maturation; sequence IILESGNVNDYEVVYPKKVTLLPTGA. Residues 47–111 form the Disintegrin domain; that stretch reads MNSANPCCDP…SDCPRNPWKS (65 aa). 4 disulfides stabilise this stretch: Cys53–Cys76, Cys67–Cys73, Cys72–Cys97, and Cys85–Cys104. Residues 89–91 carry the Cell attachment site; atypical (MLD) motif; that stretch reads MLD. Residues 112 to 128 constitute a propeptide that is removed on maturation; that stretch reads EEDEMKWSATAKGSVLM.

This sequence belongs to the disintegrin family. Dimeric disintegrin subfamily. In terms of assembly, heterodimer with subunit beta; disulfide-linked. Expressed by the venom gland.

It localises to the secreted. Functionally, inhibits ADP-induced human platelet aggregation. Antagonist of alpha-IIb/beta-3 (ITGA2B/ITGB3). Also avidly binds to the laminin-binding beta-1 integrins (alpha-3/beta-1 (ITGA3/ITGB1), alpha-6/beta-1 (ITGA6/ITGB1), and alpha-7/beta-1 (ITGA7/ITGB1)) in an RGD-independent manner. In Macrovipera lebetinus (Levantine viper), this protein is Disintegrin lebein-2-alpha.